Reading from the N-terminus, the 352-residue chain is Carbohydrate sulfotransferase 11 (352 aa).

Over 1-16 the chain is Cytoplasmic; the sequence is MKPALLEVMRMNRICR. Residues 17–37 form a helical; Signal-anchor for type II membrane protein membrane-spanning segment; that stretch reads MVLATCFGSFILVIFYFQSML. At 38 to 352 the chain is on the lumenal side; that stretch reads HPVMRRNPFG…YSVPNYLKLD (315 aa). 3'-phosphoadenylyl sulfate is bound by residues 124–130 and 186–194; these read PKVACTN and REPFERLVS. N-linked (GlcNAc...) asparagine glycosylation is found at N205, N223, N321, and N342.

The protein belongs to the sulfotransferase 2 family. Post-translationally, N-glycosylated; required for activity and stability. Predominantly expressed in brain and kidney. Also expressed at weaker level in heart, spleen and lung. Expressed in developing chondrocytes.

The protein localises to the golgi apparatus membrane. The catalysed reaction is chondroitin beta-D-glucuronate + n 3'-phosphoadenylyl sulfate = chondroitin 4'-sulfate + n adenosine 3',5'-bisphosphate + n H(+). Its function is as follows. Catalyzes the transfer of sulfate to position 4 of the N-acetylgalactosamine (GalNAc) residue of chondroitin. Chondroitin sulfate constitutes the predominant proteoglycan present in cartilage and is distributed on the surfaces of many cells and extracellular matrices. Can also sulfate Gal residues in desulfated dermatan sulfate. Preferentially sulfates in GlcA-&gt;GalNAc unit than in IdoA-&gt;GalNAc unit. Does not form 4, 6-di-O-sulfated GalNAc when chondroitin sulfate C is used as an acceptor. This chain is Carbohydrate sulfotransferase 11 (Chst11), found in Mus musculus (Mouse).